The sequence spans 398 residues: Growth-regulating factor 3 (398 aa).

Positions 1–17 are enriched in low complexity; the sequence is MDLQLKQWRSQQQQQHQ. Positions 1–32 are disordered; sequence MDLQLKQWRSQQQQQHQTESEEQPSAAKIPKH. The region spanning 76-111 is the QLQ domain; sequence FFSWAQWQELELQALIYRYMLAGAAVPQELLLPIKK. The WRC domain occupies 144–188; it reads DPEPGRCRRTDGKKWRCSRDVFAGHKYCERHMHRGRNRSRKPVET. 2 consecutive short sequence motifs (bipartite nuclear localization signal) follow at residues 149 to 159 and 177 to 184; these read RCRRTDGKKWR and RGRNRSRK. Composition is skewed to polar residues over residues 299 to 350 and 383 to 398; these read SLQE…RDQQ and PTSV…QAFH. A disordered region spans residues 299 to 398; it reads SLQEADNSSS…QLGVSTQAFH (100 aa).

This sequence belongs to the GRF family. As to expression, strongly expressed in actively growing and developing tissues, such as roots, upper stems, and shoot tips containing the shoot apical meristem (SAM) and flower buds. Also expressed in mature flowers, but weakly expressed in mature stems and leaves.

The protein localises to the nucleus. Functionally, transcription activator that plays a role in the regulation of cell expansion in leaf and cotyledons tissues. Component of a network formed by miR396, the GRFs and their interacting factors (GIFs) acting in the regulation of meristem function, at least partially through the control of cell proliferation. microRNA396-GRF1/GRF3 regulatory module acts as a developmental regulator in the reprogramming of root cells during cyst nematode infection, leading to the formation of the syncytium. This Arabidopsis thaliana (Mouse-ear cress) protein is Growth-regulating factor 3 (GRF3).